Reading from the N-terminus, the 332-residue chain is GTP 3',8-cyclase (332 aa).

One can recognise a Radical SAM core domain in the interval 7–221 (QYERLHDYVR…FDLCKQAGLD (215 aa)). Arg-16 provides a ligand contact to GTP. The [4Fe-4S] cluster site is built by Cys-23 and Cys-27. Residue Tyr-29 participates in S-adenosyl-L-methionine binding. Residue Cys-30 participates in [4Fe-4S] cluster binding. GTP is bound at residue Arg-66. An S-adenosyl-L-methionine-binding site is contributed by Gly-70. GTP is bound at residue Thr-97. Residue Ser-121 coordinates S-adenosyl-L-methionine. Lys-158 lines the GTP pocket. An S-adenosyl-L-methionine-binding site is contributed by Met-192. [4Fe-4S] cluster is bound by residues Cys-256 and Cys-259. GTP is bound at residue 261 to 263 (RLR). Residue Cys-273 participates in [4Fe-4S] cluster binding.

The protein belongs to the radical SAM superfamily. MoaA family. As to quaternary structure, monomer and homodimer. Requires [4Fe-4S] cluster as cofactor.

It catalyses the reaction GTP + AH2 + S-adenosyl-L-methionine = (8S)-3',8-cyclo-7,8-dihydroguanosine 5'-triphosphate + 5'-deoxyadenosine + L-methionine + A + H(+). Its pathway is cofactor biosynthesis; molybdopterin biosynthesis. Functionally, catalyzes the cyclization of GTP to (8S)-3',8-cyclo-7,8-dihydroguanosine 5'-triphosphate. The chain is GTP 3',8-cyclase from Limosilactobacillus fermentum (strain NBRC 3956 / LMG 18251) (Lactobacillus fermentum).